The following is a 138-amino-acid chain: NADH-quinone oxidoreductase subunit A (138 aa).

Transmembrane regions (helical) follow at residues 8–28 (FGAV…GYLT), 63–83 (FYVV…LFPW), and 93–113 (FALI…AYAW).

Belongs to the complex I subunit 3 family. NDH-1 is composed of 14 different subunits. Subunits NuoA, H, J, K, L, M, N constitute the membrane sector of the complex.

It is found in the cell inner membrane. It carries out the reaction a quinone + NADH + 5 H(+)(in) = a quinol + NAD(+) + 4 H(+)(out). Functionally, NDH-1 shuttles electrons from NADH, via FMN and iron-sulfur (Fe-S) centers, to quinones in the respiratory chain. The immediate electron acceptor for the enzyme in this species is believed to be a menaquinone. Couples the redox reaction to proton translocation (for every two electrons transferred, four hydrogen ions are translocated across the cytoplasmic membrane), and thus conserves the redox energy in a proton gradient. The chain is NADH-quinone oxidoreductase subunit A from Prosthecochloris aestuarii (strain DSM 271 / SK 413).